A 215-amino-acid polypeptide reads, in one-letter code: Cytochrome b6 (215 aa).

Residues 32 to 52 (IFHCLGGITLTCFLVQVATGF) traverse the membrane as a helical segment. Residue cysteine 35 participates in heme c binding. Histidine 86 and histidine 100 together coordinate heme b. 3 consecutive transmembrane segments (helical) span residues 90–110 (ASMM…TGGF), 116–136 (LTWV…VTGY), and 186–206 (LHTF…FPMI). Histidine 187 and histidine 202 together coordinate heme b.

It belongs to the cytochrome b family. PetB subfamily. As to quaternary structure, the 4 large subunits of the cytochrome b6-f complex are cytochrome b6, subunit IV (17 kDa polypeptide, PetD), cytochrome f and the Rieske protein, while the 4 small subunits are PetG, PetL, PetM and PetN. The complex functions as a dimer. Heme b serves as cofactor. The cofactor is heme c.

It is found in the plastid. The protein resides in the chloroplast thylakoid membrane. In terms of biological role, component of the cytochrome b6-f complex, which mediates electron transfer between photosystem II (PSII) and photosystem I (PSI), cyclic electron flow around PSI, and state transitions. This is Cytochrome b6 from Amborella trichopoda.